The primary structure comprises 162 residues: UPF0305 protein MmarC5_0909 (162 aa).

This sequence belongs to the UPF0305 family.

The chain is UPF0305 protein MmarC5_0909 from Methanococcus maripaludis (strain C5 / ATCC BAA-1333).